Consider the following 1518-residue polypeptide: WD repeat-containing protein 62 (1518 aa).

N-acetylalanine is present on A2. Residue S33 is modified to Phosphoserine. The residue at position 46 (T46) is a Phosphothreonine. S49 carries the phosphoserine modification. T50 is subject to Phosphothreonine. At S52 the chain carries Phosphoserine. 12 WD repeats span residues 109–150 (TARK…QVAE), 153–194 (GHKY…VVAS), 196–234 (KVSC…ETKV), 291–330 (INLK…YLAN), 357–396 (AVYP…RVGK), 402–450 (FHSS…DSHW), 490–529 (DVKA…ELVK), 532–574 (AHDA…NLEQ), 578–618 (DHSS…DGLH), 626–665 (AEKT…QKKC), 671–713 (GDEG…KMFG), and 714–752 (HSEI…TNCM). S501 bears the Phosphoserine mark. The segment covering 762–772 (RQQQQHTNDKK) has biased composition (basic and acidic residues). 2 disordered regions span residues 762–824 (RQQQ…DPDP) and 908–935 (ASLL…KESS). Polar residues predominate over residues 781–790 (TYVSTPSEIH). The segment covering 797–809 (QTEDDLEEECEPE) has biased composition (acidic residues). The stretch at 803–846 (EEECEPEEMLKTPSKDSLDPDPRCLLTNGKLPLWAKRLLGDDDV) is one WD 13 repeat. Positions 810–824 (EMLKTPSKDSLDPDP) are enriched in basic and acidic residues. Positions 908-920 (ASLLSESESPQEA) are enriched in low complexity. S944 carries the post-translational modification Phosphoserine. The disordered stretch occupies residues 962-1055 (EVEAGPGDQQ…PSSSLPQTPE (94 aa)). 2 stretches are compositionally biased toward polar residues: residues 971–981 (QGDSYLRVSSD) and 1045–1054 (VPSSSLPQTP). T1053 is modified (phosphothreonine). Phosphoserine is present on residues S1070, S1093, S1101, S1123, S1144, S1228, S1248, and S1249. A WD 14 repeat occupies 1132-1173 (GGSQPRAGTGYASPDRTHVLAAGKAEETLEAWRPPPPCLTSL). One copy of the WD 15 repeat lies at 1255–1293 (SLGQELQAITTATTPSLDSEGQEPALRSWGNHEARANLR). T1268 bears the Phosphothreonine mark. The disordered stretch occupies residues 1339-1377 (FRPSLPAPESPGLPAHPSNPQLPEARPGIPGGTASLLEP).

Can form homodimers (via C-terminus). Interacts (via C-terminus) with MAPKBP1 (via C-terminus). Interacts with CDK5RAP2, CEP152, CEP63 and KIAA0753. CEP63, CDK5RAP2, CEP152, WDR62 are proposed to form a stepwise assembled complex at the centrosome forming a ring near parental centrioles. In terms of tissue distribution, present in fetal brain, enriched within the ventricular and subventricular zone (at protein level). In the embryonic brain it is expressed in mitotic neural precursor cells.

The protein localises to the nucleus. Its subcellular location is the cytoplasm. The protein resides in the cytoskeleton. It is found in the spindle pole. It localises to the microtubule organizing center. The protein localises to the centrosome. Its subcellular location is the centriole. Its function is as follows. Required for cerebral cortical development. Plays a role in neuronal proliferation and migration. Plays a role in mother-centriole-dependent centriole duplication; the function also seems to involve CEP152, CDK5RAP2 and CEP63 through a stepwise assembled complex at the centrosome that recruits CDK2 required for centriole duplication. The sequence is that of WD repeat-containing protein 62 (WDR62) from Homo sapiens (Human).